Reading from the N-terminus, the 208-residue chain is Small ribosomal subunit protein uS4 (208 aa).

The S4 RNA-binding domain occupies 98–161; the sequence is RRLDNVIYRL…RKIPVLAEAQ (64 aa).

Belongs to the universal ribosomal protein uS4 family. As to quaternary structure, part of the 30S ribosomal subunit. Contacts protein S5. The interaction surface between S4 and S5 is involved in control of translational fidelity.

One of the primary rRNA binding proteins, it binds directly to 16S rRNA where it nucleates assembly of the body of the 30S subunit. Its function is as follows. With S5 and S12 plays an important role in translational accuracy. The sequence is that of Small ribosomal subunit protein uS4 from Nitratidesulfovibrio vulgaris (strain ATCC 29579 / DSM 644 / CCUG 34227 / NCIMB 8303 / VKM B-1760 / Hildenborough) (Desulfovibrio vulgaris).